Here is a 353-residue protein sequence, read N- to C-terminus: N-acetyl-gamma-glutamyl-phosphate reductase (353 aa).

C157 is a catalytic residue.

It belongs to the NAGSA dehydrogenase family. Type 1 subfamily.

The protein resides in the cytoplasm. The enzyme catalyses N-acetyl-L-glutamate 5-semialdehyde + phosphate + NADP(+) = N-acetyl-L-glutamyl 5-phosphate + NADPH + H(+). It participates in amino-acid biosynthesis; L-arginine biosynthesis; N(2)-acetyl-L-ornithine from L-glutamate: step 3/4. In terms of biological role, catalyzes the NADPH-dependent reduction of N-acetyl-5-glutamyl phosphate to yield N-acetyl-L-glutamate 5-semialdehyde. The sequence is that of N-acetyl-gamma-glutamyl-phosphate reductase from Bordetella avium (strain 197N).